Reading from the N-terminus, the 139-residue chain is MARTKSTVIARKVTGGKAPRKQIGSKAARKSAAPSNTSGGVKKPHRYKPGTVALREIRRYQKSTELLIRKLPFQRLVREIAQDFKTDLRFQSSAIGALQESVEAYLVSLFEDTNLCAIHAKRVTIQKKDIHLARRLRGE.

The interval 1-48 (MARTKSTVIARKVTGGKAPRKQIGSKAARKSAAPSNTSGGVKKPHRYK) is disordered. The residue at position 5 (Lys-5) is an N6,N6,N6-trimethyllysine; alternate. Lys-5 bears the N6,N6-dimethyllysine; alternate mark. N6-methyllysine; alternate is present on residues Lys-5 and Lys-12. N6-acetyllysine; alternate is present on residues Lys-12, Lys-17, Lys-21, Lys-26, Lys-30, and Lys-42. Lys-17 carries the post-translational modification N6,N6-dimethyllysine; alternate. Lys-21, Lys-26, Lys-30, and Lys-42 each carry N6-methyllysine; alternate. 2 positions are modified to N6,N6,N6-trimethyllysine; alternate: Lys-30 and Lys-42. Lys-30 and Lys-42 each carry N6,N6-dimethyllysine; alternate. Lys-62 and Lys-70 each carry N6-acetyllysine. Lys-85 is modified (N6,N6,N6-trimethyllysine; alternate). Lys-85 is subject to N6,N6-dimethyllysine; alternate. Position 85 is an N6-methyllysine; alternate (Lys-85).

This sequence belongs to the histone H3 family. In terms of assembly, the nucleosome is a histone octamer containing two molecules each of H2A, H2B, H3 and H4 assembled in one H3-H4 heterotetramer and two H2A-H2B heterodimers. The octamer wraps approximately 147 bp of DNA. Post-translationally, mono-, di- and trimethylated by the COMPASS complex to form H3K4me1/2/3. H3K4me activates gene expression by regulating transcription elongation and plays a role in telomere length maintenance. H3K4me enrichment correlates with transcription levels, and occurs in a 5' to 3' gradient with H3K4me3 enrichment at the 5'-end of genes, shifting to H3K4me2 and then H3K4me1. Methylated by SET2 to form H3K36me. H3K36me represses gene expression. Methylated by DOT1 to form H3K79me. H3K79me is required for association of SIR proteins with telomeric regions and for telomeric silencing. The COMPASS-mediated formation of H3K4me2/3 and the DOT1-mediated formation of H3K79me require H2BK123ub1. In terms of processing, acetylation of histone H3 leads to transcriptional activation. Acetylated by GCN5 to form H3K14ac. H3K14ac can also be formed by ESA1. H3K56ac formation occurs predominantly in newly synthesized H3 molecules during G1, S and G2/M of the cell cycle and may be involved in DNA repair.

The protein localises to the nucleus. It localises to the chromosome. Its function is as follows. Core component of nucleosome. Nucleosomes wrap and compact DNA into chromatin, limiting DNA accessibility to the cellular machineries which require DNA as a template. Histones thereby play a central role in transcription regulation, DNA repair, DNA replication and chromosomal stability. DNA accessibility is regulated via a complex set of post-translational modifications of histones, also called histone code, and nucleosome remodeling. The chain is Histone H3 (HHT1) from Yarrowia lipolytica (strain CLIB 122 / E 150) (Yeast).